Consider the following 110-residue polypeptide: UPF0060 membrane protein Psyr_3752 (110 aa).

The next 4 helical transmembrane spans lie at 5–25 (LWFFLAALFEIFGCYAFWLWL), 28–48 (GKSALWVIPALVSLTVFALLL), 59–79 (AYAAYGGIYIVASIAWLGLVE), and 84–104 (LGTDWLGLAFCVIGATIILLG).

It belongs to the UPF0060 family.

It localises to the cell inner membrane. In Pseudomonas syringae pv. syringae (strain B728a), this protein is UPF0060 membrane protein Psyr_3752.